A 281-amino-acid polypeptide reads, in one-letter code: Energy-coupling factor transporter ATP-binding protein EcfA1 (281 aa).

Residues 6–242 enclose the ABC transporter domain; it reads IDVKHLDYRY…GEALIKMGLD (237 aa). ATP is bound at residue 42–49; sequence GHNGSGKS.

The protein belongs to the ABC transporter superfamily. Energy-coupling factor EcfA family. Forms a stable energy-coupling factor (ECF) transporter complex composed of 2 membrane-embedded substrate-binding proteins (S component), 2 ATP-binding proteins (A component) and 2 transmembrane proteins (T component).

It is found in the cell membrane. Functionally, ATP-binding (A) component of a common energy-coupling factor (ECF) ABC-transporter complex. Unlike classic ABC transporters this ECF transporter provides the energy necessary to transport a number of different substrates. This is Energy-coupling factor transporter ATP-binding protein EcfA1 from Lactiplantibacillus plantarum (strain ATCC BAA-793 / NCIMB 8826 / WCFS1) (Lactobacillus plantarum).